We begin with the raw amino-acid sequence, 268 residues long: UPF0328 protein ECU03_0040 (268 aa).

Belongs to the UPF0328 family.

This chain is UPF0328 protein ECU03_0040, found in Encephalitozoon cuniculi (strain GB-M1) (Microsporidian parasite).